Reading from the N-terminus, the 266-residue chain is GTP-binding protein Rhes (266 aa).

Residue 26–33 (GASRVGKS) coordinates GTP. The Effector region motif lies at 48-56 (YTPTIEDFH). GTP-binding positions include 73–77 (DTSGN) and 140–143 (NKND). The interval 189–235 (MAKLPHEMSPALHRKISVQYGDAFHPRPFCMRRVKEMDAYGMVSPFA) is interaction with GNB1, GNB2 and GNB3. Cys-263 bears the Cysteine methyl ester mark. Cys-263 is lipidated: S-farnesyl cysteine. A propeptide spans 264-266 (TIQ) (removed in mature form).

It belongs to the small GTPase superfamily. RasD family. Monomer (Potential). Interacts with PIK3CA and UBE2I. Interacts with GNB1, GNB2 and GNB3. Interacts with HTT; interacts with mutant HTT (mHTT) with a much higher affinity than wild type HTT. In terms of processing, farnesylated. Farnesylation is required for membrane targeting. As to expression, pancreatic endocrine cells (islets of Langerhans).

The protein resides in the cell membrane. GTPase signaling protein that binds to and hydrolyzes GTP. Regulates signaling pathways involving G-proteins-coupled receptor and heterotrimeric proteins such as GNB1, GNB2 and GNB3. May be involved in selected striatal competencies, mainly locomotor activity and motor coordination. The protein is GTP-binding protein Rhes (RASD2) of Homo sapiens (Human).